A 468-amino-acid chain; its full sequence is 3-isopropylmalate dehydratase large subunit (468 aa).

A disordered region spans residues 53–74 (QPSKTVATMDHNVPTDSRDLAG). [4Fe-4S] cluster-binding residues include C347, C407, and C410.

Belongs to the aconitase/IPM isomerase family. LeuC type 1 subfamily. Heterodimer of LeuC and LeuD. [4Fe-4S] cluster serves as cofactor.

The catalysed reaction is (2R,3S)-3-isopropylmalate = (2S)-2-isopropylmalate. The protein operates within amino-acid biosynthesis; L-leucine biosynthesis; L-leucine from 3-methyl-2-oxobutanoate: step 2/4. Catalyzes the isomerization between 2-isopropylmalate and 3-isopropylmalate, via the formation of 2-isopropylmaleate. The sequence is that of 3-isopropylmalate dehydratase large subunit from Pasteurella multocida (strain Pm70).